The following is a 1604-amino-acid chain: Calmodulin-regulated spectrin-associated protein 1 (1604 aa).

Ser216 is subject to Phosphoserine. The Calponin-homology (CH) domain occupies 235 to 350 (PVDFARVVRY…FIAELFWWFE (116 aa)). 3 positions are modified to phosphoserine: Ser390, Ser394, and Ser435. The interval 394–413 (SPAAMSPADLPPSTQPLTEG) is disordered. The segment at 444 to 491 (RQKQQKVSQAEEIPDQRHRSNSLTRADGQPRGAAIAWPDKKNRPVSQP) is disordered. Thr531 carries the phosphothreonine modification. Residues Ser571, Ser574, Ser581, Ser593, Ser607, Ser647, Ser739, Ser745, Ser755, and Ser757 each carry the phosphoserine modification. Residues 642–671 (MAKRPSEGSQPLVRKKVTGSHGSRDLNRTF) are disordered. Residues 784–806 (EEESAKLQEDMKVKEHEDKDDAS) show a composition bias toward basic and acidic residues. 2 disordered regions span residues 784-824 (EEES…SMSM) and 842-888 (LNSC…KDPA). Composition is skewed to low complexity over residues 813 to 824 (LSTTSQLSSMSM) and 847 to 858 (TKSSTSSSQKTT). Basic and acidic residues predominate over residues 874-886 (QKREQSPSRHSKD). Residues 888–909 (ASLLASELVQLHMQLEEKRRAI) form a sufficient for interaction with SPTBN1 region. Coiled-coil stretches lie at residues 890-926 (LLAS…QRLK) and 1026-1058 (DVNE…QEQL). The sufficient for interaction with calmodulin stretch occupies residues 920 to 939 (SARQRLKLGKAAFLHVVKKG). 3 disordered regions span residues 1085-1163 (FVEP…GELP), 1246-1271 (PDED…KPGV), and 1298-1448 (RKAE…DRDW). Ser1090 is subject to Phosphoserine. The segment covering 1113-1124 (RPAELKVPKDRQ) has biased composition (basic and acidic residues). Positions 1125–1137 (QGCSRSKTPTPSV) are enriched in polar residues. A Phosphoserine modification is found at Ser1154. Composition is skewed to basic and acidic residues over residues 1246–1258 (PDED…HESS) and 1298–1348 (RKAE…EYLR). The stretch at 1286–1357 (AKKRAAFLLK…RRKQQQALEE (72 aa)) forms a coiled coil. The span at 1363–1374 (PKSKPKKPRPKS) shows a compositional bias: basic residues. Residues 1382-1394 (SDSGTKCSSTPDN) are compositionally biased toward polar residues. A compositionally biased stretch (low complexity) spans 1395 to 1412 (LSQTHSGSSLSLASAATT). A phosphoserine mark is found at Ser1400 and Ser1429. One can recognise a CKK domain in the interval 1465 to 1599 (GPKLFKEPSS…QPKRPTVPKK (135 aa)). At Tyr1539 the chain carries Phosphotyrosine.

This sequence belongs to the CAMSAP1 family. In terms of assembly, interacts with spectrin via SPTBN1; the interaction is direct. Interacts with calmodulin; calcium-dependent it prevents interaction with spectrin. As to expression, in brain, specifically expressed in astrocytes (at protein level).

The protein resides in the cytoplasm. It is found in the cytoskeleton. In terms of biological role, key microtubule-organizing protein that specifically binds the minus-end of non-centrosomal microtubules and regulates their dynamics and organization. Specifically recognizes growing microtubule minus-ends and stabilizes microtubules. Acts on free microtubule minus-ends that are not capped by microtubule-nucleating proteins or other factors and protects microtubule minus-ends from depolymerization. In contrast to CAMSAP2 and CAMSAP3, tracks along the growing tips of minus-end microtubules without significantly affecting the polymerization rate: binds at the very tip of the microtubules minus-end and acts as a minus-end tracking protein (-TIP) that dissociates from microtubules after allowing tubulin incorporation. Through interaction with spectrin may regulate neurite outgrowth. This chain is Calmodulin-regulated spectrin-associated protein 1 (Camsap1), found in Rattus norvegicus (Rat).